Consider the following 1255-residue polypeptide: DNA-directed RNA polymerase subunit beta' (1255 aa).

Residues Cys-60, Cys-62, Cys-77, and Cys-80 each contribute to the Zn(2+) site. Residues Asp-503, Asp-505, and Asp-507 each coordinate Mg(2+). Positions 875, 950, 957, and 960 each coordinate Zn(2+).

This sequence belongs to the RNA polymerase beta' chain family. In terms of assembly, the RNAP catalytic core consists of 2 alpha, 1 beta, 1 beta' and 1 omega subunit. When a sigma factor is associated with the core the holoenzyme is formed, which can initiate transcription. Mg(2+) serves as cofactor. Zn(2+) is required as a cofactor.

It carries out the reaction RNA(n) + a ribonucleoside 5'-triphosphate = RNA(n+1) + diphosphate. Its function is as follows. DNA-dependent RNA polymerase catalyzes the transcription of DNA into RNA using the four ribonucleoside triphosphates as substrates. This is DNA-directed RNA polymerase subunit beta' from Mycoplasma capricolum subsp. capricolum (strain California kid / ATCC 27343 / NCTC 10154).